Consider the following 101-residue polypeptide: MWGPNLGGFSDTQDATAEIQAIADQVKSQLEEKENKKFPVFKAVKFRSQVVAGMNYLIKVQVDEDDFVHIRVFESLPHENKPVALTSYQTNKVRHDELTYF.

At Met1 the chain carries N-acetylmethionine. A Secondary area of contact motif is present at residues Gln49–Gly53.

Belongs to the cystatin family.

Its subcellular location is the cytoplasm. Strong inhibitor of papain and cathepsin L but poor inhibitor of cathepsin B. The chain is Stefin-C from Bos taurus (Bovine).